The sequence spans 248 residues: 3-deoxy-manno-octulosonate cytidylyltransferase (248 aa).

The protein belongs to the KdsB family.

The protein localises to the cytoplasm. The enzyme catalyses 3-deoxy-alpha-D-manno-oct-2-ulosonate + CTP = CMP-3-deoxy-beta-D-manno-octulosonate + diphosphate. It participates in nucleotide-sugar biosynthesis; CMP-3-deoxy-D-manno-octulosonate biosynthesis; CMP-3-deoxy-D-manno-octulosonate from 3-deoxy-D-manno-octulosonate and CTP: step 1/1. The protein operates within bacterial outer membrane biogenesis; lipopolysaccharide biosynthesis. In terms of biological role, activates KDO (a required 8-carbon sugar) for incorporation into bacterial lipopolysaccharide in Gram-negative bacteria. In Salmonella dublin (strain CT_02021853), this protein is 3-deoxy-manno-octulosonate cytidylyltransferase.